Reading from the N-terminus, the 380-residue chain is Probable dual-specificity RNA methyltransferase RlmN (380 aa).

Glu-112 serves as the catalytic Proton acceptor. Residues 118 to 358 form the Radical SAM core domain; it reads YPDRVTACLS…TTVRDTRGRE (241 aa). An intrachain disulfide couples Cys-125 to Cys-363. 3 residues coordinate [4Fe-4S] cluster: Cys-132, Cys-136, and Cys-139. S-adenosyl-L-methionine-binding positions include 187–188, Ser-221, 244–246, and Asn-320; these read GE and SLH. Cys-363 serves as the catalytic S-methylcysteine intermediate.

This sequence belongs to the radical SAM superfamily. RlmN family. [4Fe-4S] cluster serves as cofactor.

It is found in the cytoplasm. The catalysed reaction is adenosine(2503) in 23S rRNA + 2 reduced [2Fe-2S]-[ferredoxin] + 2 S-adenosyl-L-methionine = 2-methyladenosine(2503) in 23S rRNA + 5'-deoxyadenosine + L-methionine + 2 oxidized [2Fe-2S]-[ferredoxin] + S-adenosyl-L-homocysteine. It carries out the reaction adenosine(37) in tRNA + 2 reduced [2Fe-2S]-[ferredoxin] + 2 S-adenosyl-L-methionine = 2-methyladenosine(37) in tRNA + 5'-deoxyadenosine + L-methionine + 2 oxidized [2Fe-2S]-[ferredoxin] + S-adenosyl-L-homocysteine. In terms of biological role, specifically methylates position 2 of adenine 2503 in 23S rRNA and position 2 of adenine 37 in tRNAs. The polypeptide is Probable dual-specificity RNA methyltransferase RlmN (Salinispora arenicola (strain CNS-205)).